The chain runs to 184 residues: ATP synthase subunit b, chloroplastic (184 aa).

A helical membrane pass occupies residues 27 to 49; the sequence is LATNPINLSVVLGVLIFFGKGVL.

The protein belongs to the ATPase B chain family. In terms of assembly, F-type ATPases have 2 components, F(1) - the catalytic core - and F(0) - the membrane proton channel. F(1) has five subunits: alpha(3), beta(3), gamma(1), delta(1), epsilon(1). F(0) has four main subunits: a(1), b(1), b'(1) and c(10-14). The alpha and beta chains form an alternating ring which encloses part of the gamma chain. F(1) is attached to F(0) by a central stalk formed by the gamma and epsilon chains, while a peripheral stalk is formed by the delta, b and b' chains.

The protein localises to the plastid. It localises to the chloroplast thylakoid membrane. In terms of biological role, f(1)F(0) ATP synthase produces ATP from ADP in the presence of a proton or sodium gradient. F-type ATPases consist of two structural domains, F(1) containing the extramembraneous catalytic core and F(0) containing the membrane proton channel, linked together by a central stalk and a peripheral stalk. During catalysis, ATP synthesis in the catalytic domain of F(1) is coupled via a rotary mechanism of the central stalk subunits to proton translocation. Component of the F(0) channel, it forms part of the peripheral stalk, linking F(1) to F(0). In Eucalyptus globulus subsp. globulus (Tasmanian blue gum), this protein is ATP synthase subunit b, chloroplastic.